The following is a 22-amino-acid chain: Zinc metalloproteinase oxiagin (22 aa).

Positions 14 to 22 (CYIEFYVVV) constitute a Peptidase M12B domain.

Belongs to the venom metalloproteinase (M12B) family. P-III subfamily. P-IIId sub-subfamily. In terms of assembly, heterotrimer; disulfide-linked. The heterotrimer consists of 1 metalloproteinase chain and 2 lectin chains. Zn(2+) serves as cofactor. In terms of processing, N-glycosylated. As to expression, expressed by the venom gland.

The protein resides in the secreted. Snake venom metalloproteinase that inhibits the classical complement pathway dose-dependently. It acts by binding to carbohydrates of IgG within the antibody-sensitized sheep erythrocytes (EA) complex, and thus prevents interaction of component C2 with immobilized C4b. Also induces cation-independent hemagglutination that can be prevented by D-galactose pretreatment. In Naja oxiana (Central Asian cobra), this protein is Zinc metalloproteinase oxiagin.